Here is a 360-residue protein sequence, read N- to C-terminus: Phosphate acyltransferase (360 aa).

The protein belongs to the PlsX family. As to quaternary structure, homodimer. Probably interacts with PlsY.

The protein localises to the cytoplasm. The catalysed reaction is a fatty acyl-[ACP] + phosphate = an acyl phosphate + holo-[ACP]. The protein operates within lipid metabolism; phospholipid metabolism. Catalyzes the reversible formation of acyl-phosphate (acyl-PO(4)) from acyl-[acyl-carrier-protein] (acyl-ACP). This enzyme utilizes acyl-ACP as fatty acyl donor, but not acyl-CoA. The sequence is that of Phosphate acyltransferase from Caulobacter vibrioides (strain ATCC 19089 / CIP 103742 / CB 15) (Caulobacter crescentus).